A 356-amino-acid chain; its full sequence is 1-deoxy-D-xylulose 5-phosphate reductoisomerase (356 aa).

NADPH is bound by residues Thr-7, Gly-8, Ser-9, Ile-10, Gly-31, Asn-33, and Asn-111. Lys-112 serves as a coordination point for 1-deoxy-D-xylulose 5-phosphate. Glu-113 is an NADPH binding site. Asp-131 is a Mn(2+) binding site. 4 residues coordinate 1-deoxy-D-xylulose 5-phosphate: Ser-132, Glu-133, Ser-155, and His-178. Residue Glu-133 participates in Mn(2+) binding. Gly-184 is a binding site for NADPH. Positions 191, 196, 197, and 200 each coordinate 1-deoxy-D-xylulose 5-phosphate. Glu-200 is a binding site for Mn(2+).

This sequence belongs to the DXR family. It depends on Mg(2+) as a cofactor. Mn(2+) is required as a cofactor.

It carries out the reaction 2-C-methyl-D-erythritol 4-phosphate + NADP(+) = 1-deoxy-D-xylulose 5-phosphate + NADPH + H(+). Its pathway is isoprenoid biosynthesis; isopentenyl diphosphate biosynthesis via DXP pathway; isopentenyl diphosphate from 1-deoxy-D-xylulose 5-phosphate: step 1/6. In terms of biological role, catalyzes the NADPH-dependent rearrangement and reduction of 1-deoxy-D-xylulose-5-phosphate (DXP) to 2-C-methyl-D-erythritol 4-phosphate (MEP). This is 1-deoxy-D-xylulose 5-phosphate reductoisomerase from Campylobacter jejuni subsp. jejuni serotype O:23/36 (strain 81-176).